Consider the following 823-residue polypeptide: Leucine--tRNA ligase (823 aa).

Residues 42–52 (PYPSGTLHMGH) carry the 'HIGH' region motif. The 'KMSKS' region motif lies at 575–579 (KMSKS). Lysine 578 lines the ATP pocket.

The protein belongs to the class-I aminoacyl-tRNA synthetase family.

It localises to the cytoplasm. The enzyme catalyses tRNA(Leu) + L-leucine + ATP = L-leucyl-tRNA(Leu) + AMP + diphosphate. This chain is Leucine--tRNA ligase, found in Legionella pneumophila (strain Lens).